We begin with the raw amino-acid sequence, 434 residues long: UDP-N-acetylglucosamine 1-carboxyvinyltransferase (434 aa).

Position 34 to 35 (lysine 34 to asparagine 35) interacts with phosphoenolpyruvate. Arginine 104 is a binding site for UDP-N-acetyl-alpha-D-glucosamine. Catalysis depends on cysteine 128, which acts as the Proton donor. Cysteine 128 is subject to 2-(S-cysteinyl)pyruvic acid O-phosphothioketal. 2 residues coordinate UDP-N-acetyl-alpha-D-glucosamine: aspartate 319 and isoleucine 341.

It belongs to the EPSP synthase family. MurA subfamily.

Its subcellular location is the cytoplasm. It catalyses the reaction phosphoenolpyruvate + UDP-N-acetyl-alpha-D-glucosamine = UDP-N-acetyl-3-O-(1-carboxyvinyl)-alpha-D-glucosamine + phosphate. It functions in the pathway cell wall biogenesis; peptidoglycan biosynthesis. Functionally, cell wall formation. Adds enolpyruvyl to UDP-N-acetylglucosamine. This Prochlorococcus marinus (strain MIT 9313) protein is UDP-N-acetylglucosamine 1-carboxyvinyltransferase.